Here is a 1321-residue protein sequence, read N- to C-terminus: Multidrug resistance protein pgp-1 (1321 aa).

Over 1–77 (MLRNGSLRQS…YTTTLEKLLL (77 aa)) the chain is Cytoplasmic. An ABC transmembrane type-1 1 domain is found at 77–381 (LFIGTLVAVI…AGPQLAVLGT (305 aa)). The chain crosses the membrane as a helical span at residues 78–98 (FIGTLVAVITGAGLPLMSILQ). 2 N-linked (GlcNAc...) asparagine glycosylation sites follow: N115 and N125. The helical transmembrane segment at 144 to 164 (AMTVGMWAAGQITVTCYLYVA) threads the bilayer. N190 carries an N-linked (GlcNAc...) asparagine glycan. The next 4 helical transmembrane spans lie at 213–233 (KIGM…VAFT), 240–260 (LVML…AKSM), 321–341 (ISFG…FYIG), and 350–370 (LNFG…MALG). The Cytoplasmic portion of the chain corresponds to 371-753 (LAGPQLAVLG…LYHARPHALS (383 aa)). The ABC transporter 1 domain occupies 416–652 (ITVENVHFTY…QGLYYDLVTA (237 aa)). 451–458 (GSSGCGKS) is an ATP binding site. 2 helical membrane-spanning segments follow: residues 754–774 (LFIG…YSVF) and 798–818 (LMFL…TFFM). Residues 754–1043 (LFIGMSTATI…ATSYFPEYAK (290 aa)) enclose the ABC transmembrane type-1 2 domain. The N-linked (GlcNAc...) asparagine glycan is linked to N850. 4 helical membrane passes run 874–894 (FSTV…AFFY), 895–915 (GWQM…GQYL), 978–998 (IQGL…TCAY), and 1017–1037 (VLRV…ATSY). Over 1038 to 1321 (FPEYAKATFA…LTQKQMTEKK (284 aa)) the chain is Cytoplasmic. The 239-residue stretch at 1077-1315 (VIFKNVRFAY…KGAYYKLTQK (239 aa)) folds into the ABC transporter 2 domain. 1112 to 1119 (GPSGCGKS) contacts ATP.

Belongs to the ABC transporter superfamily. ABCB family. Multidrug resistance exporter (TC 3.A.1.201) subfamily. In terms of tissue distribution, intestinal cells.

It is found in the membrane. It catalyses the reaction ATP + H2O + xenobioticSide 1 = ADP + phosphate + xenobioticSide 2.. Functionally, energy-dependent efflux pump responsible for decreased drug accumulation in multidrug-resistant cells. The protein is Multidrug resistance protein pgp-1 (pgp-1) of Caenorhabditis elegans.